The sequence spans 490 residues: ATP synthase subunit beta, plastid (490 aa).

170 to 177 (GGAGVGKT) contacts ATP.

The protein belongs to the ATPase alpha/beta chains family. F-type ATPases have 2 components, CF(1) - the catalytic core - and CF(0) - the membrane proton channel. CF(1) has five subunits: alpha(3), beta(3), gamma(1), delta(1), epsilon(1). CF(0) has four main subunits: a(1), b(1), b'(1) and c(9-12).

The protein resides in the plastid membrane. It catalyses the reaction ATP + H2O + 4 H(+)(in) = ADP + phosphate + 5 H(+)(out). Its function is as follows. Produces ATP from ADP in the presence of a proton gradient across the membrane. The catalytic sites are hosted primarily by the beta subunits. This Cuscuta exaltata (Tall dodder) protein is ATP synthase subunit beta, plastid.